Reading from the N-terminus, the 107-residue chain is U20-lycotoxin-Ls1b (107 aa).

An N-terminal signal peptide occupies residues 1–30; that stretch reads MFSTSDQVSKMNSRILSALLILGIATCVIA. Residues 31–76 form the WAP domain; sequence GGFCPKSRHPQCNLSYKINDCCAQSDCRVGSVCCVEGCGNVCRAES. 5 disulfide bridges follow: Cys34-Cys64, Cys42-Cys68, Cys51-Cys63, Cys52-Cys90, and Cys57-Cys72.

It belongs to the venom protein 11 family. 02 (wap-2) subfamily. Contains 5 disulfide bonds. Expressed by the venom gland.

The protein resides in the secreted. Its function is as follows. Has antibacterial activity. The protein is U20-lycotoxin-Ls1b of Lycosa singoriensis (Wolf spider).